The following is a 345-amino-acid chain: Heat-inducible transcription repressor HrcA (345 aa).

It belongs to the HrcA family.

Negative regulator of class I heat shock genes (grpE-dnaK-dnaJ and groELS operons). Prevents heat-shock induction of these operons. The sequence is that of Heat-inducible transcription repressor HrcA from Dehalococcoides mccartyi (strain ATCC BAA-2100 / JCM 16839 / KCTC 5957 / BAV1).